A 350-amino-acid chain; its full sequence is CMP-N-acetylneuraminate-beta-galactosamide-alpha-2,3-sialyltransferase 2 (350 aa).

Residues 1-6 lie on the Cytoplasmic side of the membrane; the sequence is MKCSLR. Residues 7–27 form a helical; Signal-anchor for type II membrane protein membrane-spanning segment; that stretch reads VWFLSMAFLLVFIMSLLFTYS. Residues 28 to 350 lie on the Lumenal side of the membrane; that stretch reads HHSMATLPYL…ASKIEVYRGN (323 aa). 3 disulfide bridges follow: Cys70-Cys75, Cys72-Cys149, and Cys152-Cys291. Residues Gln116, Asn157, and Asn180 each coordinate substrate. The N-linked (GlcNAc...) asparagine glycan is linked to Asn211. Substrate contacts are provided by Tyr240, Tyr276, Gly280, Gly300, His309, and His326.

This sequence belongs to the glycosyltransferase 29 family. Homodimer; disulfide-linked. Homodimer formation occurs in the endoplasmic reticulum. Post-translationally, the soluble form derives from the membrane form by proteolytic processing. In terms of processing, N-glycosylated; necessary for proper exit from endoplasmic reticulum and trafficking to the Golgi apparatus. As to expression, strongly expressed in brain and liver and to a lesser extent in heart and kidney. Scarcely detectable in lung, pancreas, spleen and submaxillary gland. Expressed in L5 dorsal root ganglion (DRG) neurons (at protein level).

It localises to the golgi apparatus. Its subcellular location is the golgi stack membrane. The protein localises to the secreted. The catalysed reaction is a beta-D-galactosyl-(1-&gt;3)-N-acetyl-alpha-D-galactosaminyl derivative + CMP-N-acetyl-beta-neuraminate = an N-acetyl-alpha-neuraminyl-(2-&gt;3)-beta-D-galactosyl-(1-&gt;3)-N-acetyl-alpha-D-galactosaminyl derivative + CMP + H(+). It carries out the reaction a ganglioside GM1 (d18:1(4E)) + CMP-N-acetyl-beta-neuraminate = a ganglioside GD1a (d18:1(4E)) + CMP + H(+). It catalyses the reaction ganglioside GM1 (d18:1(4E)/18:0) + CMP-N-acetyl-beta-neuraminate = ganglioside GD1a (18:1(4E)/18:0) + CMP + H(+). The enzyme catalyses a ganglioside GA1 + CMP-N-acetyl-beta-neuraminate = a ganglioside GM1b + CMP + H(+). The catalysed reaction is a ganglioside GA1 (d18:1(4E)) + CMP-N-acetyl-beta-neuraminate = a ganglioside GM1b (d18:1(4E)) + CMP + H(+). It carries out the reaction a ganglioside GD1b + CMP-N-acetyl-beta-neuraminate = a ganglioside GT1b + CMP + H(+). It catalyses the reaction a ganglioside GD1b (d18:1(4E)) + CMP-N-acetyl-beta-neuraminate = a ganglioside GT1b (d18:1(4E)) + CMP + H(+). The enzyme catalyses a globoside GalGb4Cer + CMP-N-acetyl-beta-neuraminate = a globoside MSGG + CMP + H(+). Its pathway is protein modification; protein glycosylation. It functions in the pathway glycolipid biosynthesis. A beta-galactoside alpha2-3 sialyltransferase primarily involved in terminal sialylation of ganglio and globo series glycolipids. Catalyzes the transfer of sialic acid (N-acetyl-neuraminic acid; Neu5Ac) from the nucleotide sugar donor CMP-Neu5Ac onto acceptor Galbeta-(1-&gt;3)-GalNAc-terminated glycoconjugates through an alpha2-3 linkage. Sialylates GM1/GM1a, GA1/asialo-GM1 and GD1b gangliosides to form GD1a, GM1b and GT1b, respectively. Together with ST3GAL3, primarily responsible for biosynthesis of brain GD1a and GT1b that function as ligands for myelin-associated glycoprotein MAG on axons, regulating MAG expression and axonal myelin stability and regeneration. Via GT1b regulates TLR2 signaling in spinal cord microglia in response to nerve injury. Responsible for the sialylation of the pluripotent stem cell- and cancer stem cell-associated antigen SSEA3, forming SSEA4. Sialylates with low efficiency asialofetuin, presumably onto O-glycosidically linked Galbeta-(1-&gt;3)-GalNAc-O-Ser. The polypeptide is CMP-N-acetylneuraminate-beta-galactosamide-alpha-2,3-sialyltransferase 2 (Mus musculus (Mouse)).